We begin with the raw amino-acid sequence, 732 residues long: mRNA-binding protein puf3 (732 aa).

Residues Pro98–Ser123 form a disordered region. Residues Ser100–Ser109 show a composition bias toward polar residues. The 341-residue stretch at Gln376–Arg716 folds into the PUM-HD domain. Pumilio repeat units follow at residues Asp396–Gln431, Glu432–Ser468, Gln469–Gln504, Glu505–Arg540, Ala541–Glu576, Leu577–Asp611, Leu612–Asn647, and Glu655–Ser690.

It belongs to the PUF3 family.

The protein localises to the mitochondrion outer membrane. The protein resides in the cytoplasm. Its function is as follows. RNA-binding protein involved in post-transcriptional regulation. Predominantly binds to mRNAs encoding mitochondrial proteins and localizes them to the vicinity of mitochondria for translation. Regulates mitochondrial biogenesis, motility and morphology. The protein is mRNA-binding protein puf3 (puf3) of Schizosaccharomyces pombe (strain 972 / ATCC 24843) (Fission yeast).